A 555-amino-acid polypeptide reads, in one-letter code: Potassium-transporting ATPase potassium-binding subunit (555 aa).

The next 10 membrane-spanning stretches (helical) occupy residues 2–22, 60–80, 130–150, 173–193, 246–266, 278–298, 374–394, 412–432, 483–503, and 525–545; these read IWVA…PTGI, QYAL…YFIF, IGIT…VMAF, VFLP…VPQT, MSNI…PFTY, ILFV…TTSE, AGFV…GLMV, LIAV…ALAL, LVMF…AASL, and GIFI…MLVL.

Belongs to the KdpA family. As to quaternary structure, the system is composed of three essential subunits: KdpA, KdpB and KdpC.

Its subcellular location is the cell membrane. Part of the high-affinity ATP-driven potassium transport (or Kdp) system, which catalyzes the hydrolysis of ATP coupled with the electrogenic transport of potassium into the cytoplasm. This subunit binds the extracellular potassium ions and delivers the ions to the membrane domain of KdpB through an intramembrane tunnel. The sequence is that of Potassium-transporting ATPase potassium-binding subunit from Bacillus mycoides (strain KBAB4) (Bacillus weihenstephanensis).